Consider the following 270-residue polypeptide: Beta carbonic anhydrase 1 (270 aa).

Zn(2+) contacts are provided by cysteine 39, aspartate 41, histidine 105, and cysteine 108.

It belongs to the beta-class carbonic anhydrase family. Requires Zn(2+) as cofactor.

The catalysed reaction is hydrogencarbonate + H(+) = CO2 + H2O. Functionally, reversible hydration of carbon dioxide. The polypeptide is Beta carbonic anhydrase 1 (Caenorhabditis briggsae).